A 688-amino-acid chain; its full sequence is Eukaryotic translation initiation factor 3 subunit B (688 aa).

A disordered region spans residues 1 to 32 (MAKKKGENYDSDGGDDQDYDEEPNFDDPEGFV). Over residues 9-32 (YDSDGGDDQDYDEEPNFDDPEGFV) the composition is skewed to acidic residues. An RRM domain is found at 57-141 (NVIVVDNIPV…HTLLVNLFSD (85 aa)). WD repeat units follow at residues 208-246 (RDRF…KINK), 247-287 (FPHS…EKRS), 291-329 (DGTS…LLDK), 332-367 (IKVQ…TLLE), 440-482 (EVKE…EPTM), and 527-572 (GDHF…KRVN). Residues 613-642 (RIRMTRASKELLEKRAKLREQFVEYRTKRV) are a coiled coil.

This sequence belongs to the eIF-3 subunit B family. As to quaternary structure, component of the eukaryotic translation initiation factor 3 (eIF-3) complex.

It is found in the cytoplasm. Its function is as follows. RNA-binding component of the eukaryotic translation initiation factor 3 (eIF-3) complex, which is involved in protein synthesis of a specialized repertoire of mRNAs and, together with other initiation factors, stimulates binding of mRNA and methionyl-tRNAi to the 40S ribosome. The eIF-3 complex specifically targets and initiates translation of a subset of mRNAs involved in cell proliferation. The protein is Eukaryotic translation initiation factor 3 subunit B of Aedes aegypti (Yellowfever mosquito).